Reading from the N-terminus, the 1001-residue chain is Ankyrin repeat domain-containing protein 35 (1001 aa).

6 ANK repeats span residues 53–82 (NGQS…DINS), 86–115 (DGST…NEDA), 119–148 (ENRS…FLDV), 152–181 (DGRT…RVNV), 185–214 (NDKS…DAGA), and 218–247 (TGHD…RRRR). Disordered regions lie at residues 256–296 (PDLA…PCSE), 352–482 (PRAS…VAEP), and 559–601 (PEVP…ALGG). Residues 281–295 (PEEEQEEKEDEDPCS) show a composition bias toward acidic residues. Residues 295 to 344 (SEEWRWKYEEERRKVVRLEQELVQKTEECKTQAAAYLDLENQIREQAQEL) are a coiled coil. Positions 402 to 422 (KKAEDSAPGKIQYEVHGRSQP) are enriched in basic and acidic residues. The span at 423 to 434 (EEQGPPQSPASE) shows a compositional bias: low complexity. The span at 440–450 (TGQQLTTNGAQ) shows a compositional bias: polar residues. Positions 579–588 (KQDEEKEKRV) are enriched in basic and acidic residues. Coiled-coil stretches lie at residues 610–696 (KGQL…LLAS), 733–810 (ISTL…IGKL), and 851–968 (QELK…HEEI). The interval 879–902 (RRSGDLAAQAAEQERQASEMRGRS) is disordered. A compositionally biased stretch (basic and acidic residues) spans 890-902 (EQERQASEMRGRS).

This chain is Ankyrin repeat domain-containing protein 35 (ANKRD35), found in Homo sapiens (Human).